Reading from the N-terminus, the 53-residue chain is Rho GTPase-activating protein 6 (53 aa).

Its subcellular location is the cytoplasm. Functionally, GTPase activator for the Rho-type GTPases by converting them to an inactive GDP-bound state. Could regulate the interactions of signaling molecules with the actin cytoskeleton. Promotes continuous elongation of cytoplasmic processes during cell motility and simultaneous retraction of the cell body changing the cell morphology. This Takifugu rubripes (Japanese pufferfish) protein is Rho GTPase-activating protein 6 (arhgap6).